The chain runs to 521 residues: Probable cytosol aminopeptidase (521 aa).

The Mn(2+) site is built by Lys-268 and Asp-273. The active site involves Lys-280. The Mn(2+) site is built by Asp-291, Asp-350, and Glu-352. The active site involves Arg-354.

This sequence belongs to the peptidase M17 family. It depends on Mn(2+) as a cofactor.

The protein localises to the cytoplasm. It catalyses the reaction Release of an N-terminal amino acid, Xaa-|-Yaa-, in which Xaa is preferably Leu, but may be other amino acids including Pro although not Arg or Lys, and Yaa may be Pro. Amino acid amides and methyl esters are also readily hydrolyzed, but rates on arylamides are exceedingly low.. The enzyme catalyses Release of an N-terminal amino acid, preferentially leucine, but not glutamic or aspartic acids.. Functionally, presumably involved in the processing and regular turnover of intracellular proteins. Catalyzes the removal of unsubstituted N-terminal amino acids from various peptides. This Chromobacterium violaceum (strain ATCC 12472 / DSM 30191 / JCM 1249 / CCUG 213 / NBRC 12614 / NCIMB 9131 / NCTC 9757 / MK) protein is Probable cytosol aminopeptidase.